The primary structure comprises 317 residues: R-phycoerythrin gamma chain, chloroplastic (317 aa).

A chloroplast-targeting transit peptide spans 1 to 40 (MASPAFAVNGMFTPVKLSGSFTASMPVDSKPAASATGVRM). Phycourobilin contacts are provided by Cys-94 and Cys-133. Residue Cys-210 participates in (2R,3E)-phycoerythrobilin binding. Cys-297 contacts phycourobilin.

In terms of assembly, heteromer of 1 alpha, 1 beta and 2 gamma chains. In terms of processing, contains four covalently linked bilin chromophores.

Its subcellular location is the plastid. The protein resides in the chloroplast thylakoid membrane. In terms of biological role, critical for the incorporation of phycoerythrin in the phycobilisome complex. The polypeptide is R-phycoerythrin gamma chain, chloroplastic (Aglaothamnion neglectum (Red alga)).